A 102-amino-acid polypeptide reads, in one-letter code: Small ribosomal subunit protein uS10 (102 aa).

The protein belongs to the universal ribosomal protein uS10 family. As to quaternary structure, part of the 30S ribosomal subunit.

In terms of biological role, involved in the binding of tRNA to the ribosomes. The polypeptide is Small ribosomal subunit protein uS10 (Streptococcus thermophilus (strain ATCC BAA-250 / LMG 18311)).